A 666-amino-acid polypeptide reads, in one-letter code: Probable potassium transport system protein Kup (666 aa).

The next 12 membrane-spanning stretches (helical) occupy residues 16–36 (GFIIALGIVYGDIGTSPLYTI), 58–78 (ISLIIWTLTLITTIKYVLIAL), 100–120 (PWLIIPAMIGGATLLSDGALT), 141–161 (IYQNQTNVIITTLVILIVLFG), 165–185 (FGTGFIGKIFGPVMFIWFSFL), 221–241 (IFILGSIFLATTGAEALYSDL), 253–273 (WPFVKMCIVLSYCGQAAWILA), 294–314 (VYLVSLATLAAIIASQALISG), 343–363 (LYIPVINWILFAVTSCTVLAF), 373–393 (YGLAITITMLMTTILLKYYLI), 399–419 (PILAHLVMAFFALVEFIFFLA), and 424–444 (FMHGGYAVVILALAIVFVMFI).

Belongs to the HAK/KUP transporter (TC 2.A.72) family.

The protein localises to the cell membrane. It catalyses the reaction K(+)(in) + H(+)(in) = K(+)(out) + H(+)(out). Functionally, transport of potassium into the cell. Likely operates as a K(+):H(+) symporter. The sequence is that of Probable potassium transport system protein Kup from Streptococcus pyogenes serotype M1.